We begin with the raw amino-acid sequence, 251 residues long: HTH-type transcriptional regulator UlaR (251 aa).

The HTH deoR-type domain occupies 3–58; sequence EAQRHQILLEMLAQLGFVTVEKVVERLGISPATARRDINKLDERGKLKKVRNGAEA. The segment at residues 20–39 is a DNA-binding region (H-T-H motif); that stretch reads VTVEKVVERLGISPATARRD.

The protein resides in the cytoplasm. In terms of biological role, represses ulaG and the ulaABCDEF operon. The protein is HTH-type transcriptional regulator UlaR of Shigella sonnei (strain Ss046).